The sequence spans 570 residues: Putative ABC transporter ATP-binding protein MW2603 (570 aa).

ABC transporter domains are found at residues 6-247 (ISFK…GIRE) and 304-537 (LELN…ASLR). Residues 40–47 (GASGSGKS) and 338–345 (GHNGAGKS) contribute to the ATP site.

The protein belongs to the ABC transporter superfamily.

The protein localises to the cell membrane. Functionally, probably part of an ABC transporter complex. Responsible for energy coupling to the transport system. The chain is Putative ABC transporter ATP-binding protein MW2603 from Staphylococcus aureus (strain MW2).